The primary structure comprises 157 residues: Protein Smg (157 aa).

The protein belongs to the Smg family.

This is Protein Smg from Klebsiella pneumoniae (strain 342).